The sequence spans 264 residues: MKIEAVIFDWAGTTVDYGCFAPLEVFMEIFHKRGVAITAEEARKPMGLLKIDHVRALTEMPRIASEWNRVFRQLPTEADIQEMYEEFEEILFAILPRYASPINGVKEVIASLRERGIKIGSTTGYTREMMDIVAKEAALQGYKPDFLVTPDDVPAGRPYPWMCYKNAMELGVYPMNHMIKVGDTVSDMKEGRNAGMWTVGVILGSSELGLTEEEVENMDSVELREKIEVVRNRFVENGAHFTIETMQELESVMEHIEKQELIIS.

The active-site Nucleophile is Asp-9. Asp-9 and Ala-11 together coordinate Mg(2+). The active-site Schiff-base intermediate with substrate is Lys-50. Asp-183 contributes to the Mg(2+) binding site.

It belongs to the HAD-like hydrolase superfamily. PhnX family. Homodimer. The cofactor is Mg(2+).

The enzyme catalyses phosphonoacetaldehyde + H2O = acetaldehyde + phosphate + H(+). Functionally, involved in phosphonate degradation. The polypeptide is Phosphonoacetaldehyde hydrolase (phnX) (Bacillus cereus).